A 237-amino-acid chain; its full sequence is Segregation and condensation protein A (237 aa).

The protein belongs to the ScpA family. As to quaternary structure, component of a cohesin-like complex composed of ScpA, ScpB and the Smc homodimer, in which ScpA and ScpB bind to the head domain of Smc. The presence of the three proteins is required for the association of the complex with DNA.

It is found in the cytoplasm. Functionally, participates in chromosomal partition during cell division. May act via the formation of a condensin-like complex containing Smc and ScpB that pull DNA away from mid-cell into both cell halves. The sequence is that of Segregation and condensation protein A from Streptococcus thermophilus (strain CNRZ 1066).